Consider the following 244-residue polypeptide: Protein IN2-1 homolog B (244 aa).

Positions methionine 1–proline 27 are disordered. In terms of domain architecture, GST N-terminal spans glycine 32–alanine 113. Glutathione-binding positions include valine 85 and glutamate 97–serine 98. Residues aspartate 118–leucine 241 enclose the GST C-terminal domain.

The polypeptide is Protein IN2-1 homolog B (GSTZ5) (Oryza sativa subsp. indica (Rice)).